Here is a 68-residue protein sequence, read N- to C-terminus: Protein SlyX homolog (68 aa).

This sequence belongs to the SlyX family.

This is Protein SlyX homolog from Pseudomonas putida (strain GB-1).